Consider the following 265-residue polypeptide: Indole-3-glycerol phosphate synthase (265 aa).

This sequence belongs to the TrpC family.

The catalysed reaction is 1-(2-carboxyphenylamino)-1-deoxy-D-ribulose 5-phosphate + H(+) = (1S,2R)-1-C-(indol-3-yl)glycerol 3-phosphate + CO2 + H2O. It functions in the pathway amino-acid biosynthesis; L-tryptophan biosynthesis; L-tryptophan from chorismate: step 4/5. The protein is Indole-3-glycerol phosphate synthase of Xanthomonas campestris pv. campestris (strain 8004).